The chain runs to 307 residues: Lipoyl synthase (307 aa).

[4Fe-4S] cluster-binding residues include Cys-55, Cys-60, Cys-66, Cys-81, Cys-85, Cys-88, and Ser-292. Residues Trp-67 to Ser-281 form the Radical SAM core domain.

This sequence belongs to the radical SAM superfamily. Lipoyl synthase family. The cofactor is [4Fe-4S] cluster.

The protein resides in the cytoplasm. The catalysed reaction is [[Fe-S] cluster scaffold protein carrying a second [4Fe-4S](2+) cluster] + N(6)-octanoyl-L-lysyl-[protein] + 2 oxidized [2Fe-2S]-[ferredoxin] + 2 S-adenosyl-L-methionine + 4 H(+) = [[Fe-S] cluster scaffold protein] + N(6)-[(R)-dihydrolipoyl]-L-lysyl-[protein] + 4 Fe(3+) + 2 hydrogen sulfide + 2 5'-deoxyadenosine + 2 L-methionine + 2 reduced [2Fe-2S]-[ferredoxin]. Its pathway is protein modification; protein lipoylation via endogenous pathway; protein N(6)-(lipoyl)lysine from octanoyl-[acyl-carrier-protein]: step 2/2. Catalyzes the radical-mediated insertion of two sulfur atoms into the C-6 and C-8 positions of the octanoyl moiety bound to the lipoyl domains of lipoate-dependent enzymes, thereby converting the octanoylated domains into lipoylated derivatives. This chain is Lipoyl synthase, found in Mycobacterium avium (strain 104).